The sequence spans 406 residues: Inner kinetochore subunit OKP1 (406 aa).

Disordered stretches follow at residues 1–37 (MAAD…SDSS) and 59–122 (TQSK…TSGE). Polar residues predominate over residues 8–21 (FLQNIENDSINNGQ). Residues 26–37 (SPNRSSSESDSS) show a composition bias toward low complexity. Residues 69 to 78 (NSDDAEEGEI) show a composition bias toward acidic residues. Ser-70 carries the post-translational modification Phosphoserine. 2 stretches are compositionally biased toward basic and acidic residues: residues 79–89 (EERTNKEEGQY) and 97–106 (LRFEVGKEST). Positions 107–122 (GKLQSHLSDGSATSGE) are enriched in polar residues. A coiled-coil region spans residues 239-285 (SKRQFIQNRYSQELQNNERLEAILSREQNLLEETRKLCMNLKTNNKK). The segment at 317-340 (MHPDGPVTFRNDSHELNLMLNDPI) is CTF19-MCM21 binding motif. The interval 353-400 (VLSLLPSLKEYTKKSKELKETMGQMISDSHEEEIKEVFVPHHESHQDK) is interaction with NKP1-NKP2. The segment at 379–406 (SDSHEEEIKEVFVPHHESHQDKTEEDIH) is disordered. Residues 380-406 (DSHEEEIKEVFVPHHESHQDKTEEDIH) are compositionally biased toward basic and acidic residues.

It belongs to the CENP-Q/OKP1 family. As to quaternary structure, component of the heterotetrameric kinetochore subcomplex COMA, which consists of AME1, CTF19, MCM21 and OKP1. The COMA subcomplex is part of a larger constitutive centromere-associated network (CCAN) (also known as central kinetochore CTF19 complex in yeast), which is composed of at least AME1, CHL4, CNN1, CTF3, CTF19, IML3, MCM16, MCM21, MCM22, MHF1, MHF2, MIF2, NKP1, NKP2, OKP1 and WIP1. COMA binds the centromeric nucleosome-binding protein MIF2, and to the outer kinetochore MIND subcomplex. OKP1 interacts directly with AME1, with an NKP1-NKP2 dimer, and with CTF19-MCM21.

It is found in the nucleus. Its subcellular location is the chromosome. The protein resides in the centromere. It localises to the kinetochore. In terms of biological role, component of the kinetochore, a multiprotein complex that assembles on centromeric DNA and attaches chromosomes to spindle microtubules, mediating chromosome segregation and sister chromatid segregation during meiosis and mitosis. Component of the inner kinetochore COMA complex, which connects centromere-associated proteins and the outer kinetochore. COMA interacts with other inner kinetochore proteins to form the inner kinetochore constitutive centromere-associated network (CCAN), which serves as a structural platform for outer kinetochore assembly. In Saccharomyces cerevisiae (strain ATCC 204508 / S288c) (Baker's yeast), this protein is Inner kinetochore subunit OKP1.